The chain runs to 197 residues: MKDLTERQRKVLLFIEEFIEKNGYPPSVREIARRFRITPRGALLHLIALEKKGYIERKNGKPRALRISKSIRNKIPLIGEIRAGEKREAIEYLEDYIEIPESFLSSGYDHFLLKVKGESMIEEHICDGDLVLVRRQDWAQNGDIVAAMVDGEVTLKKFYQRGDTVELRPANREMSSMFFRAEKVKILGKVVGVFRKL.

The H-T-H motif DNA-binding region spans 28–47 (VREIARRFRITPRGALLHLI). Residues Ser119 and Lys156 each act as for autocatalytic cleavage activity in the active site.

It belongs to the peptidase S24 family. As to quaternary structure, homodimer.

The catalysed reaction is Hydrolysis of Ala-|-Gly bond in repressor LexA.. Functionally, represses a number of genes involved in the response to DNA damage (SOS response), including recA and lexA. In the presence of single-stranded DNA, RecA interacts with LexA causing an autocatalytic cleavage which disrupts the DNA-binding part of LexA, leading to derepression of the SOS regulon and eventually DNA repair. The protein is LexA repressor of Thermotoga maritima (strain ATCC 43589 / DSM 3109 / JCM 10099 / NBRC 100826 / MSB8).